A 401-amino-acid polypeptide reads, in one-letter code: 1-deoxy-D-xylulose 5-phosphate reductoisomerase (401 aa).

NADPH-binding residues include Thr11, Gly12, Ser13, Ile14, Arg38, Asn39, and Asn125. A 1-deoxy-D-xylulose 5-phosphate-binding site is contributed by Lys126. Glu127 lines the NADPH pocket. Asp151 contributes to the Mn(2+) binding site. 1-deoxy-D-xylulose 5-phosphate-binding residues include Ser152, Glu153, Ser179, and His202. Glu153 lines the Mn(2+) pocket. An NADPH-binding site is contributed by Gly208. Ser215, Asn220, Lys221, and Glu224 together coordinate 1-deoxy-D-xylulose 5-phosphate. Glu224 lines the Mn(2+) pocket.

This sequence belongs to the DXR family. Mg(2+) is required as a cofactor. The cofactor is Mn(2+).

It catalyses the reaction 2-C-methyl-D-erythritol 4-phosphate + NADP(+) = 1-deoxy-D-xylulose 5-phosphate + NADPH + H(+). It participates in isoprenoid biosynthesis; isopentenyl diphosphate biosynthesis via DXP pathway; isopentenyl diphosphate from 1-deoxy-D-xylulose 5-phosphate: step 1/6. In terms of biological role, catalyzes the NADPH-dependent rearrangement and reduction of 1-deoxy-D-xylulose-5-phosphate (DXP) to 2-C-methyl-D-erythritol 4-phosphate (MEP). In Paraburkholderia xenovorans (strain LB400), this protein is 1-deoxy-D-xylulose 5-phosphate reductoisomerase.